The sequence spans 158 residues: Transcriptional repressor NrdR (158 aa).

A zinc finger lies at 3-34 (CPFCGSLDTQVIDSRANEAGDAIRRRRRCAAC). Positions 49 to 139 (PQIVKTNGTR…VYKSFKDPDD (91 aa)) constitute an ATP-cone domain.

This sequence belongs to the NrdR family. Zn(2+) is required as a cofactor.

Functionally, negatively regulates transcription of bacterial ribonucleotide reductase nrd genes and operons by binding to NrdR-boxes. The sequence is that of Transcriptional repressor NrdR from Thiobacillus denitrificans (strain ATCC 25259 / T1).